Here is a 637-residue protein sequence, read N- to C-terminus: Threonine--tRNA ligase (637 aa).

The TGS domain occupies 1–61 (MLNITLPDGS…TEDSSVQIIT (61 aa)). The segment at 242 to 533 (DHRKLGKQLD…LIENHAGSFP (292 aa)) is catalytic. The Zn(2+) site is built by C333, H384, and H510.

The protein belongs to the class-II aminoacyl-tRNA synthetase family. In terms of assembly, homodimer. Requires Zn(2+) as cofactor.

It is found in the cytoplasm. It carries out the reaction tRNA(Thr) + L-threonine + ATP = L-threonyl-tRNA(Thr) + AMP + diphosphate + H(+). In terms of biological role, catalyzes the attachment of threonine to tRNA(Thr) in a two-step reaction: L-threonine is first activated by ATP to form Thr-AMP and then transferred to the acceptor end of tRNA(Thr). Also edits incorrectly charged L-seryl-tRNA(Thr). This Neisseria meningitidis serogroup C (strain 053442) protein is Threonine--tRNA ligase.